Consider the following 330-residue polypeptide: uncharacterized protein (330 aa).

Residues 2–22 (IKPIYLIIIGTVICLVILYYF) form a helical membrane-spanning segment. 4 N-linked (GlcNAc...) asparagine; by host glycosylation sites follow: Asn-72, Asn-94, Asn-234, and Asn-315.

The protein localises to the membrane. This is an uncharacterized protein from Acanthamoeba polyphaga mimivirus (APMV).